Consider the following 53-residue polypeptide: MLHWSLVFLVFALIAAVLGFGGLAGAAVGIAKILFFVFLVIWLVAFLMGRRAI.

A run of 2 helical transmembrane segments spans residues 6 to 26 (LVFLVFALIAAVLGFGGLAGA) and 28 to 48 (VGIAKILFFVFLVIWLVAFLM).

It belongs to the UPF0391 family.

It localises to the cell membrane. The protein is UPF0391 membrane protein Acid_3618 of Solibacter usitatus (strain Ellin6076).